Reading from the N-terminus, the 80-residue chain is Translation initiation factor IF-1, chloroplastic (80 aa).

Residues 1-72 (MKKQNLIDME…TKGRIIYRLR (72 aa)) form the S1-like domain.

The protein belongs to the IF-1 family. Component of the 30S ribosomal translation pre-initiation complex which assembles on the 30S ribosome in the order IF-2 and IF-3, IF-1 and N-formylmethionyl-tRNA(fMet); mRNA recruitment can occur at any time during PIC assembly.

It is found in the plastid. The protein localises to the chloroplast. Functionally, one of the essential components for the initiation of protein synthesis. Stabilizes the binding of IF-2 and IF-3 on the 30S subunit to which N-formylmethionyl-tRNA(fMet) subsequently binds. Helps modulate mRNA selection, yielding the 30S pre-initiation complex (PIC). Upon addition of the 50S ribosomal subunit IF-1, IF-2 and IF-3 are released leaving the mature 70S translation initiation complex. This is Translation initiation factor IF-1, chloroplastic from Adiantum capillus-veneris (Maidenhair fern).